The primary structure comprises 231 residues: MAAAEMERTMSFDAAEKLKAADGGGGEVDDELEEGEIVEESNDTASYLGKEITVKHPLEHSWTFWFDNPTTKSRQTAWGSSLRNVYTFSTVEDFWGAYNNIHHPSKLIMGADFHCFKHKIEPKWEDPVCANGGTWKMSFSKGKSDTSWLYTLLAMIGHQFDHGDEICGAVVSVRAKGEKIALWTKNAANETAQVSIGKQWKQFLDYSDSVGFIFHDDAKRLDRNAKNRYTV.

EIF4G-binding regions lie at residues 56–59 and 66–102; these read HPLE and FDNPTTKSRQTAWGSSLRNVYTFSTVEDFWGAYNNIH. Residues 74-79, Lys106, and 124-125 each bind mRNA; these read RQTAWG and WE. Cysteines 129 and 167 form a disulfide. The interval 150–159 is EIF4G-binding; sequence YTLLAMIGHQ. MRNA-binding positions include 174-179 and 219-223; these read RAKGEK and KRLDR.

The protein belongs to the eukaryotic initiation factor 4E family. As to quaternary structure, EIF4F is a multi-subunit complex, the composition of which varies with external and internal environmental conditions. It is composed of at least EIF4A, EIF4E and EIF4G. EIF4E is also known to interact with other partners. In higher plants two isoforms of EIF4F have been identified, named isoform EIF4F and isoform EIF(iso)4F. Isoform EIF4F has subunits p220 and p26, whereas isoform EIF(iso)4F has subunits p82 and p28. (Microbial infection) Interacts with potyvirus viral genome-linked protein (VPg); mostly with tobacco etch virus (TEV-HAT) VPg and, to a lower extent, with potato virus Y (PVY-LYE84 and PVY-LYE90) and pepper mottle virus (PepMoV) VPg. Post-translationally, according to the redox status, the Cys-129-Cys-167 disulfide bridge may have a role in regulating protein function by affecting its ability to bind capped mRNA.

The protein resides in the nucleus. It localises to the cytoplasm. Component of the protein complex eIF4F, which is involved in the recognition of the mRNA cap, ATP-dependent unwinding of 5'-terminal secondary structure and recruitment of mRNA to the ribosome. Recognizes and binds the 7-methylguanosine-containing mRNA cap during an early step in the initiation of protein synthesis and facilitates ribosome binding by inducing the unwinding of the mRNAs secondary structures. Key component of recessive resistance to potyviruses. In terms of biological role, (Microbial infection) Susceptibility host factor required for viral infection (e.g. potato virus Y (PVY), pepper mottle virus (PepMoV) and tobacco etch virus (TEV)) by recruiting viral RNAs to the host ribosomal complex via an interaction with viral genome-linked protein (VPg). The chain is Eukaryotic translation initiation factor 4E-1 from Solanum lycopersicum (Tomato).